We begin with the raw amino-acid sequence, 445 residues long: Secretin receptor (445 aa).

The N-terminal stretch at 1 to 21 (MCPRPGPPLGLWLLLGFACAA) is a signal peptide. Residues 22–137 (HLVGAPPRLC…HERQHAYLLK (116 aa)) are Extracellular-facing. 3 disulfide bridges follow: C44–C71, C62–C103, and C85–C119. Residues N68, N96, N102, and N124 are each glycosylated (N-linked (GlcNAc...) asparagine). Residues 138 to 163 (LKVMYTVGYSSSLVMLLVALGILCAF) form a helical membrane-spanning segment. Topologically, residues 164 to 170 (RRLHCTR) are cytoplasmic. The helical transmembrane segment at 171-191 (NYIHMHLFLSFILRALSNFIK) threads the bilayer. Residues 192–212 (DAVLFSSDDAIHCDAHRVGCK) lie on the Extracellular side of the membrane. A disulfide bridge links C211 with C281. A helical membrane pass occupies residues 213–235 (LVMVFFQYCIMANYAWLLVEGLY). Residues 236 to 250 (LHSLLVVSFFSERKC) lie on the Cytoplasmic side of the membrane. A helical transmembrane segment spans residues 251-272 (LQGFVVLGWGSPAMFVTSWAVT). At 273-287 (RHFLEDSGCWDINAN) the chain is on the extracellular side. Residues 288–311 (AAIWWVIRGPVILSILINFILFIN) traverse the membrane as a helical segment. Topologically, residues 312 to 336 (ILRILTRKLRTQETRGQDMNHYKRL) are cytoplasmic. Residues 337 to 352 (ARSTLLLIPLFGVHYI) traverse the membrane as a helical segment. Over 353-363 (VFVFSPEGAME) the chain is Extracellular. A helical transmembrane segment spans residues 364–387 (IQLFFELALGSFQGLVVAVLYCFL). The Cytoplasmic segment spans residues 388 to 445 (NGEVQLEVQKKWQQWHLWEPPLCPVALSSSFSNGTSSLNSTKACPSGRSRDTCKVSII).

Belongs to the G-protein coupled receptor 2 family. Post-translationally, phosphorylated on Ser and Thr residues at the cytoplasmic C-terminus by G protein-coupled receptor kinases (GRKs).

The protein resides in the cell membrane. It localises to the basolateral cell membrane. In terms of biological role, g protein-coupled receptor activated by secretin (SCT), which is involved in different processes such as regulation of the pH of the duodenal content, food intake and water homeostasis. Ligand binding causes a conformation change that triggers signaling via guanine nucleotide-binding proteins (G proteins) and activates cAMP-dependent pathway. Upon binding to secretin, regulates the pH of the duodenum by (1) inhibiting the secretion of gastric acid from the parietal cells of the stomach and (2) stimulating the production of bicarbonate (NaHCO(3)) from the ductal cells of the pancreas. In addition to regulating the pH of the duodenal content, plays a central role in diet induced thermogenesis: acts as a non-sympathetic brown fat (BAT) activator mediating prandial thermogenesis, which consequentially induces satiation. Mechanistically, secretin released by the gut after a meal binds to secretin receptor (SCTR) in brown adipocytes, activating brown fat thermogenesis by stimulating lipolysis, which is sensed in the brain and promotes satiation. Also able to stimulate lipolysis in white adipocytes. Also plays an important role in cellular osmoregulation by regulating renal water reabsorption. Also plays a role in the central nervous system: required for synaptic plasticity. The chain is Secretin receptor (SCTR) from Oryctolagus cuniculus (Rabbit).